Here is a 163-residue protein sequence, read N- to C-terminus: Endoribonuclease YbeY (163 aa).

Residues His123, His127, and His133 each contribute to the Zn(2+) site.

The protein belongs to the endoribonuclease YbeY family. It depends on Zn(2+) as a cofactor.

It is found in the cytoplasm. Functionally, single strand-specific metallo-endoribonuclease involved in late-stage 70S ribosome quality control and in maturation of the 3' terminus of the 16S rRNA. The chain is Endoribonuclease YbeY from Helicobacter hepaticus (strain ATCC 51449 / 3B1).